The following is a 398-amino-acid chain: Succinate--CoA ligase [ADP-forming] subunit beta (398 aa).

The region spanning 9–254 (KRLLHEYGAP…LSEEDPKEIE (246 aa)) is the ATP-grasp domain. ATP is bound by residues lysine 46, 53 to 55 (GRG), glutamate 109, alanine 112, and glutamate 117. 2 residues coordinate Mg(2+): asparagine 209 and aspartate 223. Residues asparagine 274 and 331–333 (GIM) contribute to the substrate site.

It belongs to the succinate/malate CoA ligase beta subunit family. In terms of assembly, heterotetramer of two alpha and two beta subunits. The cofactor is Mg(2+).

It catalyses the reaction succinate + ATP + CoA = succinyl-CoA + ADP + phosphate. It carries out the reaction GTP + succinate + CoA = succinyl-CoA + GDP + phosphate. It functions in the pathway carbohydrate metabolism; tricarboxylic acid cycle; succinate from succinyl-CoA (ligase route): step 1/1. Functionally, succinyl-CoA synthetase functions in the citric acid cycle (TCA), coupling the hydrolysis of succinyl-CoA to the synthesis of either ATP or GTP and thus represents the only step of substrate-level phosphorylation in the TCA. The beta subunit provides nucleotide specificity of the enzyme and binds the substrate succinate, while the binding sites for coenzyme A and phosphate are found in the alpha subunit. The chain is Succinate--CoA ligase [ADP-forming] subunit beta from Bartonella tribocorum (strain CIP 105476 / IBS 506).